The following is a 378-amino-acid chain: Dof zinc finger protein 1 (378 aa).

Positions 28-38 are enriched in low complexity; sequence GANPNPAATAP. Residues 28-79 form a disordered region; the sequence is GANPNPAATAPSSVTGGALRGGGGGGAPPVAGGAGAGSTERRARPQKEKALN. Residues 45–63 are compositionally biased toward gly residues; it reads ALRGGGGGGAPPVAGGAGA. A compositionally biased stretch (basic and acidic residues) spans 66–77; it reads TERRARPQKEKA. The Dof-type zinc finger occupies 78 to 132; that stretch reads LNCPRCNSTNTKFCYYNNYSLQQPRYFCKTCRRYWTEGGSLRNVPVGGGSRKNKR. 4 residues coordinate Zn(2+): C80, C83, C105, and C108. 3 disordered regions span residues 116-148, 203-222, and 316-378; these read GSLR…ASTA, SLES…NGRG, and LKPT…GTSW. The segment covering 133 to 148 has biased composition (low complexity); it reads SSSSAASASPASASTA. Gly residues-rich tracts occupy residues 323–338, 350–361, and 369–378; these read GTGG…GVDG, AGGGGGGPGGHD, and MIGGGSGTSW.

The protein localises to the nucleus. Functionally, transcription factor that may transactivate seed storage protein genes in developing seeds. The protein is Dof zinc finger protein 1 of Oryza sativa subsp. japonica (Rice).